A 302-amino-acid polypeptide reads, in one-letter code: Troponin T, cardiac muscle isoforms (302 aa).

Positions 1–55 (MSDSEEVVEEYEQEQEEEYVEEEEEEWLEEDDGQEDQVDEEEEETEETTAEEQED) are enriched in acidic residues. Disordered stretches follow at residues 1–99 (MSDS…GERL), 138–230 (KDRI…RKPL), and 280–302 (SDHQKVKGSKAARGKTMVGGRWK). N-acetylserine is present on S2. The residue at position 2 (S2) is a Phosphoserine; by CK2. Positions 65–79 (EGDREQEPGEGESKP) are enriched in basic and acidic residues. A compositionally biased stretch (pro residues) spans 82 to 93 (KPFMPNLVPPKI). 2 stretches are compositionally biased toward basic and acidic residues: residues 138-186 (KDRI…EKEA) and 204-230 (KSEKKGGKKQTEREKKKKILSERRKPL).

The protein belongs to the troponin T family.

Its function is as follows. Troponin T is the tropomyosin-binding subunit of troponin, the thin filament regulatory complex which confers calcium-sensitivity to striated muscle actomyosin ATPase activity. The protein is Troponin T, cardiac muscle isoforms (TNNT2) of Gallus gallus (Chicken).